The primary structure comprises 95 residues: Embryonic abundant protein 1 (95 aa).

The segment covering 1 to 10 (MASGQQQQGR) has biased composition (polar residues). The segment at 1–95 (MASGQQQQGR…IDESKYKTKS (95 aa)) is disordered. Basic and acidic residues-rich tracts occupy residues 40-64 (AEGR…EMGR) and 75-95 (GGER…KTKS).

Belongs to the small hydrophilic plant seed protein family. As to expression, expressed in dry seeds and immature embryos.

In terms of biological role, em protein may act as a cytoplasm protectant during desiccation. This is Embryonic abundant protein 1 (EMP1) from Oryza sativa subsp. japonica (Rice).